A 539-amino-acid chain; its full sequence is Kynureninase 2 (539 aa).

The tract at residues 60-87 is disordered; it reads DGGVAGETKEPRVPNGVSSATKPNGTVN. Residues 75–87 show a composition bias toward polar residues; that stretch reads GVSSATKPNGTVN. Residues Leu-171, Thr-172, 199–202, Asp-290, His-293, and Tyr-315 each bind pyridoxal 5'-phosphate; that span reads FPSD. Lys-316 is modified (N6-(pyridoxal phosphate)lysine). The span at 340–352 shows a compositional bias: gly residues; it reads GGGGSGGVGGGRG. The tract at residues 340–363 is disordered; the sequence is GGGGSGGVGGGRGEGGDGDGGDGG. Pyridoxal 5'-phosphate contacts are provided by Trp-379 and Asn-407.

Belongs to the kynureninase family. As to quaternary structure, homodimer. Pyridoxal 5'-phosphate is required as a cofactor.

The protein localises to the cytoplasm. It catalyses the reaction L-kynurenine + H2O = anthranilate + L-alanine + H(+). The enzyme catalyses 3-hydroxy-L-kynurenine + H2O = 3-hydroxyanthranilate + L-alanine + H(+). Its pathway is amino-acid degradation; L-kynurenine degradation; L-alanine and anthranilate from L-kynurenine: step 1/1. The protein operates within cofactor biosynthesis; NAD(+) biosynthesis; quinolinate from L-kynurenine: step 2/3. Functionally, catalyzes the cleavage of L-kynurenine (L-Kyn) and L-3-hydroxykynurenine (L-3OHKyn) into anthranilic acid (AA) and 3-hydroxyanthranilic acid (3-OHAA), respectively. The chain is Kynureninase 2 from Chaetomium globosum (strain ATCC 6205 / CBS 148.51 / DSM 1962 / NBRC 6347 / NRRL 1970) (Soil fungus).